The chain runs to 199 residues: Peroxynitrite isomerase (199 aa).

The GXWXGXG motif lies at 20 to 26; the sequence is GVWEGTG. His-190 provides a ligand contact to heme b.

The protein belongs to the nitrobindin family. As to quaternary structure, homodimer. Heme b is required as a cofactor.

The catalysed reaction is peroxynitrite = nitrate. Its pathway is nitrogen metabolism. Heme-binding protein able to scavenge peroxynitrite and to protect free L-tyrosine against peroxynitrite-mediated nitration, by acting as a peroxynitrite isomerase that converts peroxynitrite to nitrate. Therefore, this protein likely plays a role in peroxynitrite sensing and in the detoxification of reactive nitrogen and oxygen species (RNS and ROS, respectively). Is able to bind nitric oxide (NO) in vitro, but may act as a sensor of peroxynitrite levels in vivo. The polypeptide is Peroxynitrite isomerase (Clavibacter michiganensis subsp. michiganensis (strain NCPPB 382)).